The primary structure comprises 429 residues: Serine hydroxymethyltransferase (429 aa).

(6S)-5,6,7,8-tetrahydrofolate-binding positions include Leu126 and 130-132; that span reads GHL. Lys235 is modified (N6-(pyridoxal phosphate)lysine). 359-361 is a binding site for (6S)-5,6,7,8-tetrahydrofolate; that stretch reads SPF.

It belongs to the SHMT family. In terms of assembly, homodimer. Requires pyridoxal 5'-phosphate as cofactor.

The protein resides in the cytoplasm. It catalyses the reaction (6R)-5,10-methylene-5,6,7,8-tetrahydrofolate + glycine + H2O = (6S)-5,6,7,8-tetrahydrofolate + L-serine. The protein operates within one-carbon metabolism; tetrahydrofolate interconversion. It participates in amino-acid biosynthesis; glycine biosynthesis; glycine from L-serine: step 1/1. In terms of biological role, catalyzes the reversible interconversion of serine and glycine with tetrahydrofolate (THF) serving as the one-carbon carrier. This reaction serves as the major source of one-carbon groups required for the biosynthesis of purines, thymidylate, methionine, and other important biomolecules. Also exhibits THF-independent aldolase activity toward beta-hydroxyamino acids, producing glycine and aldehydes, via a retro-aldol mechanism. The polypeptide is Serine hydroxymethyltransferase (Parasynechococcus marenigrum (strain WH8102)).